A 535-amino-acid chain; its full sequence is Cytochrome P450 4c3 (535 aa).

Heme is bound by residues Glu-342 and Cys-481.

It belongs to the cytochrome P450 family. Requires heme as cofactor.

Its subcellular location is the endoplasmic reticulum membrane. The protein localises to the microsome membrane. May be involved in the metabolism of insect hormones and in the breakdown of synthetic insecticides. The sequence is that of Cytochrome P450 4c3 (Cyp4c3) from Drosophila melanogaster (Fruit fly).